A 234-amino-acid polypeptide reads, in one-letter code: Putative lipoyltransferase 2, mitochondrial (234 aa).

The transit peptide at 1–28 (MPFVRPLVTVVRAGRHSYSAGLQLQQRL) directs the protein to the mitochondrion. In terms of domain architecture, BPL/LPL catalytic spans 39–220 (AEFRNYLVLQ…SFAKVFECRL (182 aa)). Substrate is bound by residues 83-90 (RGGLITFH), 150-152 (AIG), and 163-165 (GIG). Cysteine 181 functions as the Acyl-thioester intermediate in the catalytic mechanism.

The protein belongs to the LipB family.

The protein localises to the mitochondrion. It carries out the reaction octanoyl-[ACP] + L-lysyl-[protein] = N(6)-octanoyl-L-lysyl-[protein] + holo-[ACP] + H(+). Its pathway is protein modification; protein lipoylation via endogenous pathway; protein N(6)-(lipoyl)lysine from octanoyl-[acyl-carrier-protein]: step 1/2. Functionally, catalyzes the transfer of endogenously produced octanoic acid from octanoyl-acyl-carrier-protein onto the lipoyl domains of lipoate-dependent enzymes. Lipoyl-ACP can also act as a substrate although octanoyl-ACP is likely to be the physiological substrate. This chain is Putative lipoyltransferase 2, mitochondrial, found in Drosophila melanogaster (Fruit fly).